Here is a 141-residue protein sequence, read N- to C-terminus: Large ribosomal subunit protein uL11 (141 aa).

This sequence belongs to the universal ribosomal protein uL11 family. As to quaternary structure, part of the ribosomal stalk of the 50S ribosomal subunit. Interacts with L10 and the large rRNA to form the base of the stalk. L10 forms an elongated spine to which L12 dimers bind in a sequential fashion forming a multimeric L10(L12)X complex. In terms of processing, one or more lysine residues are methylated.

Its function is as follows. Forms part of the ribosomal stalk which helps the ribosome interact with GTP-bound translation factors. The chain is Large ribosomal subunit protein uL11 from Roseobacter denitrificans (strain ATCC 33942 / OCh 114) (Erythrobacter sp. (strain OCh 114)).